The primary structure comprises 209 residues: ATP-dependent Clp protease proteolytic subunit 2 (209 aa).

S107 acts as the Nucleophile in catalysis. The active site involves H132.

The protein belongs to the peptidase S14 family. As to quaternary structure, fourteen ClpP subunits assemble into 2 heptameric rings which stack back to back to give a disk-like structure with a central cavity, resembling the structure of eukaryotic proteasomes.

The protein resides in the cytoplasm. The catalysed reaction is Hydrolysis of proteins to small peptides in the presence of ATP and magnesium. alpha-casein is the usual test substrate. In the absence of ATP, only oligopeptides shorter than five residues are hydrolyzed (such as succinyl-Leu-Tyr-|-NHMec, and Leu-Tyr-Leu-|-Tyr-Trp, in which cleavage of the -Tyr-|-Leu- and -Tyr-|-Trp bonds also occurs).. Functionally, cleaves peptides in various proteins in a process that requires ATP hydrolysis. Has a chymotrypsin-like activity. Plays a major role in the degradation of misfolded proteins. The sequence is that of ATP-dependent Clp protease proteolytic subunit 2 from Corynebacterium jeikeium (strain K411).